A 157-amino-acid chain; its full sequence is Ribonuclease H (157 aa).

The RNase H type-1 domain occupies 4–146 (KRTEITIYTD…CDKLAVKASQ (143 aa)). Asp13, Glu51, Asp73, and Asp138 together coordinate Mg(2+).

It belongs to the RNase H family. As to quaternary structure, monomer. The cofactor is Mg(2+).

The protein resides in the cytoplasm. The enzyme catalyses Endonucleolytic cleavage to 5'-phosphomonoester.. Its function is as follows. Endonuclease that specifically degrades the RNA of RNA-DNA hybrids. This chain is Ribonuclease H, found in Trichodesmium erythraeum (strain IMS101).